We begin with the raw amino-acid sequence, 143 residues long: Large ribosomal subunit protein uL15 (143 aa).

Composition is skewed to basic residues over residues 1 to 13 (MIRK…KMRG) and 23 to 38 (KKHR…GNAG). Residues 1-38 (MIRKSKKITKMRGSRTCGYGEAKKHRGAGHRGGRGNAG) form a disordered region.

Belongs to the universal ribosomal protein uL15 family. Part of the 50S ribosomal subunit.

In terms of biological role, binds to the 23S rRNA. The protein is Large ribosomal subunit protein uL15 of Methanococcus maripaludis (strain C7 / ATCC BAA-1331).